The following is a 466-amino-acid chain: MSREINVNQMIDDSKLTPFHWRVIILSTLIIIFDGYDLVIYGVALPLLMKEWAIDPVTAGFIGSIALFGMMFGALIFGTIADKLEHLGVSRKKVIAVCIILFSLCTVLCGFSETTTQFSIFRFLAGVGIGGVMPNVIALVSEYAPKKFKSFFVTLMFSGYAIGGMTAAFLGSILVPLYGWKIMFMIAGIPLVLLLPLMKVLPESIDYLVRKKKDETVRFIMTKMVPSYQYQPDHVFVLNSSNQNQAQAPVKMIFQEQRAFSTMMFWCSIFMTLIMVYALGNWLPKLMIEAGYNLSKSLIFLFSLNVGGMIGSILGGYLADRYNVKFVTMGLLLLGAISLSLLSFQFSSVILYILIACAGAASIGAQIMLLAYMAKFYAPNVRSTGIGWGLGMGRVGAILGPILTGWLLSLQLPHFYNFLALSIPAVLGIVTVFLINDRRMYQPEPISPIANQNDTTTVKVNEAVSH.

Over 1–22 (MSREINVNQMIDDSKLTPFHWR) the chain is Cytoplasmic. A helical membrane pass occupies residues 23 to 43 (VIILSTLIIIFDGYDLVIYGV). Residues 44 to 60 (ALPLLMKEWAIDPVTAG) are Periplasmic-facing. A helical membrane pass occupies residues 61–81 (FIGSIALFGMMFGALIFGTIA). The Cytoplasmic portion of the chain corresponds to 82 to 93 (DKLEHLGVSRKK). A helical transmembrane segment spans residues 94 to 114 (VIAVCIILFSLCTVLCGFSET). Residues 115–119 (TTQFS) lie on the Periplasmic side of the membrane. The helical transmembrane segment at 120-140 (IFRFLAGVGIGGVMPNVIALV) threads the bilayer. Over 141–150 (SEYAPKKFKS) the chain is Cytoplasmic. Residues 151-171 (FFVTLMFSGYAIGGMTAAFLG) form a helical membrane-spanning segment. Residues 172-181 (SILVPLYGWK) are Periplasmic-facing. A helical transmembrane segment spans residues 182–202 (IMFMIAGIPLVLLLPLMKVLP). Topologically, residues 203 to 258 (ESIDYLVRKKKDETVRFIMTKMVPSYQYQPDHVFVLNSSNQNQAQAPVKMIFQEQR) are cytoplasmic. A helical transmembrane segment spans residues 259–279 (AFSTMMFWCSIFMTLIMVYAL). At 280 to 297 (GNWLPKLMIEAGYNLSKS) the chain is on the periplasmic side. The chain crosses the membrane as a helical span at residues 298-318 (LIFLFSLNVGGMIGSILGGYL). Residues 319–325 (ADRYNVK) are Cytoplasmic-facing. A helical membrane pass occupies residues 326–346 (FVTMGLLLLGAISLSLLSFQF). Residues 347–348 (SS) are Periplasmic-facing. Residues 349–369 (VILYILIACAGAASIGAQIML) form a helical membrane-spanning segment. At 370–387 (LAYMAKFYAPNVRSTGIG) the chain is on the cytoplasmic side. A helical transmembrane segment spans residues 388-408 (WGLGMGRVGAILGPILTGWLL). The Periplasmic segment spans residues 409–414 (SLQLPH). The helical transmembrane segment at 415-435 (FYNFLALSIPAVLGIVTVFLI) threads the bilayer. Residues 436–466 (NDRRMYQPEPISPIANQNDTTTVKVNEAVSH) lie on the Cytoplasmic side of the membrane.

It belongs to the major facilitator superfamily. Aromatic acid:H(+) symporter (AAHS) (TC 2.A.1.15) family.

It is found in the cell inner membrane. Probable uptake of benzoate. This chain is Benzoate transport protein (benK), found in Acinetobacter baylyi (strain ATCC 33305 / BD413 / ADP1).